The following is a 373-amino-acid chain: GDSL esterase/lipase LIP-4 (373 aa).

A signal peptide spans 1–32 (MATLFLYSNTFSFFFITLVSLALLILRQPSRA). Residue S47 is the Nucleophile of the active site. N-linked (GlcNAc...) asparagine glycosylation is present at N93. Residues D339 and H342 contribute to the active site.

The protein belongs to the 'GDSL' lipolytic enzyme family.

The protein localises to the secreted. The sequence is that of GDSL esterase/lipase LIP-4 (LIP4) from Arabidopsis thaliana (Mouse-ear cress).